Here is a 134-residue protein sequence, read N- to C-terminus: UPF0357 protein AAL017W (134 aa).

A signal peptide spans 1 to 23; it reads MFGLISLWHLFWLAVMAGILVVA.

This sequence belongs to the UPF0357 family.

The protein is UPF0357 protein AAL017W of Eremothecium gossypii (strain ATCC 10895 / CBS 109.51 / FGSC 9923 / NRRL Y-1056) (Yeast).